The sequence spans 57 residues: Small ribosomal subunit protein bS21 (57 aa).

A disordered region spans residues 35–57 (REHYEKPSVKRKKKAEAARKKKF). Basic residues predominate over residues 43–57 (VKRKKKAEAARKKKF).

Belongs to the bacterial ribosomal protein bS21 family.

This Alkaliphilus metalliredigens (strain QYMF) protein is Small ribosomal subunit protein bS21.